Consider the following 667-residue polypeptide: Probable potassium transport system protein Kup (667 aa).

12 helical membrane-spanning segments follow: residues glycine 16–methionine 36, valine 58–leucine 78, tryptophan 101–proline 121, threonine 146–glycine 166, threonine 167–isoleucine 187, isoleucine 221–leucine 241, tryptophan 253–alanine 273, valine 294–glycine 314, leucine 343–phenylalanine 363, tyrosine 373–isoleucine 393, proline 399–alanine 419, and valine 431–isoleucine 451.

It belongs to the HAK/KUP transporter (TC 2.A.72) family.

The protein localises to the cell membrane. The catalysed reaction is K(+)(in) + H(+)(in) = K(+)(out) + H(+)(out). Transport of potassium into the cell. Likely operates as a K(+):H(+) symporter. In Streptococcus equi subsp. zooepidemicus (strain H70), this protein is Probable potassium transport system protein Kup.